A 488-amino-acid chain; its full sequence is BTB/POZ domain-containing protein 1 (488 aa).

Over residues 1-19 (MASLGSAAAGEPATGAEAE) the composition is skewed to low complexity. A disordered region spans residues 1–42 (MASLGSAAAGEPATGAEAEPGPPAPPPPPPPPPAPSPSALGP). Residues 20-36 (PGPPAPPPPPPPPPAPS) show a composition bias toward pro residues. A BTB domain is found at 75 to 151 (SDVRFVLGKG…LYSDEVQIGP (77 aa)). Arg-85 carries the omega-N-methylarginine modification. The region spanning 190–290 (LTQARLFDEP…IRFPLMTIEE (101 aa)) is the BACK domain.

As to quaternary structure, interacts (via C-terminus) with TOP1. Interacts with TRIM5 isoform Delta. Interacts with CUL3. As to expression, strongly expressed in heart and skeletal muscle. Weakly expressed in myoblast C2C12 cells, but strongly up-regulated upon their differentiation into myotubes.

The protein resides in the cytoplasm. The protein operates within protein modification; protein ubiquitination. In terms of biological role, probable substrate-specific adapter of an E3 ubiquitin-protein ligase complex which mediates the ubiquitination and subsequent proteasomal degradation of target proteins. Seems to regulate expression levels and/or subnuclear distribution of TOP1, via an unknown mechanism. May play a role in mesenchymal differentiation where it promotes myogenic differentiation and suppresses adipogenesis. In Mus musculus (Mouse), this protein is BTB/POZ domain-containing protein 1 (Btbd1).